Reading from the N-terminus, the 586-residue chain is 2-succinyl-5-enolpyruvyl-6-hydroxy-3-cyclohexene-1-carboxylate synthase (586 aa).

It belongs to the TPP enzyme family. MenD subfamily. As to quaternary structure, homodimer. Mg(2+) is required as a cofactor. It depends on Mn(2+) as a cofactor. Requires thiamine diphosphate as cofactor.

The catalysed reaction is isochorismate + 2-oxoglutarate + H(+) = 5-enolpyruvoyl-6-hydroxy-2-succinyl-cyclohex-3-ene-1-carboxylate + CO2. It participates in quinol/quinone metabolism; 1,4-dihydroxy-2-naphthoate biosynthesis; 1,4-dihydroxy-2-naphthoate from chorismate: step 2/7. The protein operates within quinol/quinone metabolism; menaquinone biosynthesis. Functionally, catalyzes the thiamine diphosphate-dependent decarboxylation of 2-oxoglutarate and the subsequent addition of the resulting succinic semialdehyde-thiamine pyrophosphate anion to isochorismate to yield 2-succinyl-5-enolpyruvyl-6-hydroxy-3-cyclohexene-1-carboxylate (SEPHCHC). The polypeptide is 2-succinyl-5-enolpyruvyl-6-hydroxy-3-cyclohexene-1-carboxylate synthase (Geobacillus thermodenitrificans (strain NG80-2)).